The chain runs to 252 residues: Glucosamine-6-phosphate deaminase (252 aa).

Asp-67 serves as the catalytic Proton acceptor; for enolization step. Asn-137 acts as the For ring-opening step in catalysis. His-139 serves as the catalytic Proton acceptor; for ring-opening step. Glu-144 serves as the catalytic For ring-opening step.

This sequence belongs to the glucosamine/galactosamine-6-phosphate isomerase family. NagB subfamily.

The enzyme catalyses alpha-D-glucosamine 6-phosphate + H2O = beta-D-fructose 6-phosphate + NH4(+). It participates in amino-sugar metabolism; N-acetylneuraminate degradation; D-fructose 6-phosphate from N-acetylneuraminate: step 5/5. Functionally, catalyzes the reversible isomerization-deamination of glucosamine 6-phosphate (GlcN6P) to form fructose 6-phosphate (Fru6P) and ammonium ion. The chain is Glucosamine-6-phosphate deaminase from Staphylococcus aureus (strain MRSA252).